A 238-amino-acid polypeptide reads, in one-letter code: 15,16-dihydrobiliverdin:ferredoxin oxidoreductase (238 aa).

The protein belongs to the HY2 family.

The enzyme catalyses 15,16-dihydrobiliverdin + oxidized 2[4Fe-4S]-[ferredoxin] = biliverdin IXalpha + reduced 2[4Fe-4S]-[ferredoxin] + 2 H(+). Its function is as follows. Catalyzes the two-electron reduction of biliverdin IX-alpha at the C15 methine bridge. The protein is 15,16-dihydrobiliverdin:ferredoxin oxidoreductase of Prochlorococcus marinus (strain NATL2A).